The following is a 913-amino-acid chain: Alanine--tRNA ligase (913 aa).

His-600, His-604, Cys-703, and His-707 together coordinate Zn(2+).

It belongs to the class-II aminoacyl-tRNA synthetase family. Requires Zn(2+) as cofactor.

It localises to the cytoplasm. It catalyses the reaction tRNA(Ala) + L-alanine + ATP = L-alanyl-tRNA(Ala) + AMP + diphosphate. Functionally, catalyzes the attachment of alanine to tRNA(Ala) in a two-step reaction: alanine is first activated by ATP to form Ala-AMP and then transferred to the acceptor end of tRNA(Ala). Also edits incorrectly charged Ser-tRNA(Ala) and Gly-tRNA(Ala) via its editing domain. The chain is Alanine--tRNA ligase from Methanothrix thermoacetophila (strain DSM 6194 / JCM 14653 / NBRC 101360 / PT) (Methanosaeta thermophila).